We begin with the raw amino-acid sequence, 489 residues long: MNYFNTLNFRQKINQIKKCRFMEKKEFNKKNEILKNKKIVIVGCGSQGLNQGLNMRDSGLNISYALRKNSILKKNQSWINATKNNFLVGDYESLIPNADLVINLTPDKQHSNVVKELQKLMKKDACLGYSHGFNIVEKLRNIRKDITVIMVAPKCPGTEVREEYKRGFGVGTLIAVHNENDYSNMGLEVAKAWAFSTGGHRAGVLESSFVAEVKSDLMGEQTILCGMLQTASLVCYEKLITTQNHPGYAGKLIQFGWETITESLKHGGITLMMDRLSNSSKIRAFKLSQEIKEFSQNLFQKHMDDIISGDFSSKMIQDWKNKDQNLLNWRYKTKNTSFEQSPDYDKKILEQEYYDHGILMVAILKAGIELSFETMIQSGIMEESAYYESLHELPLIANTIARKKLYEMNMVISDTAEYGNYLFSESAYPILKEFVKNINNTDLGSALPRNSVNNIELYNVNTMIRNHPIEIIGRKLRSYMKNMKTIIVG.

The KARI N-terminal Rossmann domain occupies 16 to 207 (IKKCRFMEKK…GGHRAGVLES (192 aa)). NADP(+)-binding positions include 44-47 (CGSQ), Arg-67, Ser-77, and 107-109 (DKQ). His-131 is an active-site residue. Gly-157 is a binding site for NADP(+). 2 consecutive KARI C-terminal knotted domains span residues 208-343 (SFVA…QSPD) and 344-483 (YDKK…MKNM). Positions 216, 220, 388, and 392 each coordinate Mg(2+). A substrate-binding site is contributed by Ser-413.

This sequence belongs to the ketol-acid reductoisomerase family. It depends on Mg(2+) as a cofactor.

It catalyses the reaction (2R)-2,3-dihydroxy-3-methylbutanoate + NADP(+) = (2S)-2-acetolactate + NADPH + H(+). The catalysed reaction is (2R,3R)-2,3-dihydroxy-3-methylpentanoate + NADP(+) = (S)-2-ethyl-2-hydroxy-3-oxobutanoate + NADPH + H(+). The protein operates within amino-acid biosynthesis; L-isoleucine biosynthesis; L-isoleucine from 2-oxobutanoate: step 2/4. It functions in the pathway amino-acid biosynthesis; L-valine biosynthesis; L-valine from pyruvate: step 2/4. In terms of biological role, involved in the biosynthesis of branched-chain amino acids (BCAA). Catalyzes an alkyl-migration followed by a ketol-acid reduction of (S)-2-acetolactate (S2AL) to yield (R)-2,3-dihydroxy-isovalerate. In the isomerase reaction, S2AL is rearranged via a Mg-dependent methyl migration to produce 3-hydroxy-3-methyl-2-ketobutyrate (HMKB). In the reductase reaction, this 2-ketoacid undergoes a metal-dependent reduction by NADPH to yield (R)-2,3-dihydroxy-isovalerate. The sequence is that of Ketol-acid reductoisomerase (NADP(+)) from Buchnera aphidicola subsp. Diuraphis noxia.